A 274-amino-acid polypeptide reads, in one-letter code: Cytochrome b-c1 complex subunit Rieske, mitochondrial (274 aa).

Topologically, residues 79–103 (SHTDVKVPDFYDYRRLEVLDSTKSS) are mitochondrial matrix. A helical membrane pass occupies residues 104–140 (RESSEARKGFSYLVTAVTTVGVAYAAKNVVTQFISSM). The Mitochondrial intermembrane segment spans residues 141–274 (SASADVLAMA…FTGDDVVVVG (134 aa)). The region spanning 187–272 (EAAVELSQLR…YEFTGDDVVV (86 aa)) is the Rieske domain. Residues Cys-217, His-219, Cys-236, His-239, and Ser-241 each coordinate [2Fe-2S] cluster. Cys-222 and Cys-238 form a disulfide bridge.

Belongs to the Rieske iron-sulfur protein family. In terms of assembly, component of the ubiquinol-cytochrome c oxidoreductase (cytochrome b-c1 complex, complex III, CIII), a multisubunit enzyme composed of 11 subunits. The complex is composed of 3 respiratory subunits cytochrome b, cytochrome c1 and Rieske protein UQCRFS1, 2 core protein subunits UQCRC1/QCR1 and UQCRC2/QCR2, and 6 low-molecular weight protein subunits UQCRH/QCR6, UQCRB/QCR7, UQCRQ/QCR8, UQCR10/QCR9, UQCR11/QCR10 and subunit 9, the cleavage product of Rieske protein UQCRFS1. The complex exists as an obligatory dimer and forms supercomplexes (SCs) in the inner mitochondrial membrane with NADH-ubiquinone oxidoreductase (complex I, CI) and cytochrome c oxidase (complex IV, CIV), resulting in different assemblies (supercomplex SCI(1)III(2)IV(1) and megacomplex MCI(2)III(2)IV(2)). Incorporation of the Rieske protein UQCRFS1 is the penultimate step in complex III assembly. Interacts with TTC19, which is involved in the clearance of UQCRFS1 fragments. As to quaternary structure, component of the ubiquinol-cytochrome c oxidoreductase (cytochrome b-c1 complex, complex III, CIII). Subunit 9 corresponds to the mitochondrial targeting sequence (MTS) of Rieske protein UQCRFS1. It is retained after processing and incorporated inside complex III, where it remains bound to the complex and localizes between the 2 core subunits UQCRC1/QCR1 and UQCRC2/QCR2. The cofactor is [2Fe-2S] cluster. In terms of processing, proteolytic processing is necessary for the correct insertion of UQCRFS1 in the complex III dimer. Several fragments are generated during UQCRFS1 insertion, most probably due to the endogenous matrix-processing peptidase (MPP) activity of the 2 core protein subunits UQCRC1/QCR1 and UQCRC2/QCR2, which are homologous to the 2 mitochondrial-processing peptidase (MPP) subunits beta-MPP and alpha-MPP respectively. The action of the protease is also necessary for the clearance of the UQCRFS1 fragments.

Its subcellular location is the mitochondrion inner membrane. It catalyses the reaction a quinol + 2 Fe(III)-[cytochrome c](out) = a quinone + 2 Fe(II)-[cytochrome c](out) + 2 H(+)(out). Its function is as follows. Component of the ubiquinol-cytochrome c oxidoreductase, a multisubunit transmembrane complex that is part of the mitochondrial electron transport chain which drives oxidative phosphorylation. The respiratory chain contains 3 multisubunit complexes succinate dehydrogenase (complex II, CII), ubiquinol-cytochrome c oxidoreductase (cytochrome b-c1 complex, complex III, CIII) and cytochrome c oxidase (complex IV, CIV), that cooperate to transfer electrons derived from NADH and succinate to molecular oxygen, creating an electrochemical gradient over the inner membrane that drives transmembrane transport and the ATP synthase. The cytochrome b-c1 complex catalyzes electron transfer from ubiquinol to cytochrome c, linking this redox reaction to translocation of protons across the mitochondrial inner membrane, with protons being carried across the membrane as hydrogens on the quinol. In the process called Q cycle, 2 protons are consumed from the matrix, 4 protons are released into the intermembrane space and 2 electrons are passed to cytochrome c. The Rieske protein is a catalytic core subunit containing a [2Fe-2S] iron-sulfur cluster. It cycles between 2 conformational states during catalysis to transfer electrons from the quinol bound in the Q(0) site in cytochrome b to cytochrome c1. Incorporation of UQCRFS1 is the penultimate step in complex III assembly. Component of the ubiquinol-cytochrome c oxidoreductase (cytochrome b-c1 complex, complex III, CIII). UQCRFS1 undergoes proteolytic processing once it is incorporated in the complex III dimer. One of the fragments, called subunit 9, corresponds to its mitochondrial targeting sequence (MTS). The proteolytic processing is necessary for the correct insertion of UQCRFS1 in the complex III dimer, but the persistence of UQCRFS1-derived fragments may prevent newly imported UQCRFS1 to be processed and assembled into complex III and is detrimental for the complex III structure and function. The chain is Cytochrome b-c1 complex subunit Rieske, mitochondrial (UQCRFS1) from Chlorocebus aethiops (Green monkey).